The sequence spans 130 residues: Small ribosomal subunit protein uS9 (130 aa).

The interval 98 to 130 (LKRAGLLTRDPRMKERKKPGLKKARRSPQFSKR) is disordered. Positions 111–130 (KERKKPGLKKARRSPQFSKR) are enriched in basic residues.

Belongs to the universal ribosomal protein uS9 family.

The sequence is that of Small ribosomal subunit protein uS9 from Staphylococcus haemolyticus (strain JCSC1435).